A 778-amino-acid chain; its full sequence is Ribosome biogenesis protein BOP1 homolog (778 aa).

Residues 1-10 (MAKKQDRKRK) show a composition bias toward basic residues. Positions 1 to 152 (MAKKQDRKRK…DSDTSDEEDI (152 aa)) are disordered. Acidic residues-rich tracts occupy residues 44–53 (EDSTDDEGID), 60–72 (SSED…DEEG), and 84–105 (SSDE…DEEE). Residues 114 to 124 (TTSSKAETNNE) show a composition bias toward polar residues. The segment covering 142–151 (EDSDTSDEED) has biased composition (acidic residues). WD repeat units follow at residues 438-479 (GHTD…RTIE), 481-519 (EDVV…KLLI), 564-606 (NHFK…SQIP), 609-647 (KSKG…LIKK), 650-689 (TNSK…KPYQ), 693-732 (LHRN…DLLQ), and 748-778 (RDDF…RLYT).

This sequence belongs to the WD repeat BOP1/ERB1 family.

The protein localises to the nucleus. Its subcellular location is the nucleolus. The protein resides in the nucleoplasm. Required for maturation of ribosomal RNAs and formation of the large ribosomal subunit. The chain is Ribosome biogenesis protein BOP1 homolog from Drosophila willistoni (Fruit fly).